The primary structure comprises 669 residues: DNA polymerase epsilon subunit B (669 aa).

Residues Q96–D115 form a disordered region.

This sequence belongs to the DNA polymerase epsilon subunit B family. As to quaternary structure, heterotetramer. Consists of four subunits: POL2, DPB2, DPB3 and DPB4.

The protein resides in the nucleus. Functionally, as accessory component of the DNA polymerase epsilon (DNA polymerase II) participates in chromosomal DNA replication. The polypeptide is DNA polymerase epsilon subunit B (DPB2) (Debaryomyces hansenii (strain ATCC 36239 / CBS 767 / BCRC 21394 / JCM 1990 / NBRC 0083 / IGC 2968) (Yeast)).